The sequence spans 129 residues: Serum amyloid A-4 protein (129 aa).

Positions 1-18 (MKLLIGILFCTLIMGVTG) are cleaved as a signal peptide. Residues 107 to 121 (AEEWGRSGQDPDHFR) show a composition bias toward basic and acidic residues. A disordered region spans residues 107–129 (AEEWGRSGQDPDHFRPAGLPKKY).

This sequence belongs to the SAA family. In terms of assembly, apolipoprotein of the HDL complex.

It is found in the secreted. Functionally, major acute phase reactant. The chain is Serum amyloid A-4 protein from Bos taurus (Bovine).